We begin with the raw amino-acid sequence, 265 residues long: Hydroxyethylthiazole kinase (265 aa).

M36 contacts substrate. ATP contacts are provided by K112 and S160. G187 serves as a coordination point for substrate.

It belongs to the Thz kinase family. The cofactor is Mg(2+).

It carries out the reaction 5-(2-hydroxyethyl)-4-methylthiazole + ATP = 4-methyl-5-(2-phosphooxyethyl)-thiazole + ADP + H(+). It participates in cofactor biosynthesis; thiamine diphosphate biosynthesis; 4-methyl-5-(2-phosphoethyl)-thiazole from 5-(2-hydroxyethyl)-4-methylthiazole: step 1/1. Functionally, catalyzes the phosphorylation of the hydroxyl group of 4-methyl-5-beta-hydroxyethylthiazole (THZ). This is Hydroxyethylthiazole kinase from Clostridium perfringens (strain ATCC 13124 / DSM 756 / JCM 1290 / NCIMB 6125 / NCTC 8237 / Type A).